Consider the following 101-residue polypeptide: Small ribosomal subunit protein uS10 (101 aa).

Belongs to the universal ribosomal protein uS10 family. Part of the 30S ribosomal subunit.

Involved in the binding of tRNA to the ribosomes. The chain is Small ribosomal subunit protein uS10 from Flavobacterium johnsoniae (strain ATCC 17061 / DSM 2064 / JCM 8514 / BCRC 14874 / CCUG 350202 / NBRC 14942 / NCIMB 11054 / UW101) (Cytophaga johnsonae).